The primary structure comprises 307 residues: O-acetylserine dependent cystathionine beta-synthase (307 aa).

Position 44 is an N6-(pyridoxal phosphate)lysine (K44). Pyridoxal 5'-phosphate is bound by residues N74, 178 to 182 (GSGGT), and S265.

This sequence belongs to the cysteine synthase/cystathionine beta-synthase family. Requires pyridoxal 5'-phosphate as cofactor.

The catalysed reaction is O-acetyl-L-serine + L-homocysteine = L,L-cystathionine + acetate + H(+). Catalyzes the conversion of O-acetylserine and homocysteine to cystathionine. This Bacillus subtilis (strain 168) protein is O-acetylserine dependent cystathionine beta-synthase (mccA).